Reading from the N-terminus, the 145-residue chain is Large-conductance mechanosensitive channel (145 aa).

The next 2 helical transmembrane spans lie at 14-34 and 81-101; these read VIDL…VDSL and GIFI…FLMV.

It belongs to the MscL family. As to quaternary structure, homopentamer.

Its subcellular location is the cell inner membrane. In terms of biological role, channel that opens in response to stretch forces in the membrane lipid bilayer. May participate in the regulation of osmotic pressure changes within the cell. In Pelobacter propionicus (strain DSM 2379 / NBRC 103807 / OttBd1), this protein is Large-conductance mechanosensitive channel.